Here is a 152-residue protein sequence, read N- to C-terminus: Keratin, high-sulfur matrix protein, B2C (152 aa).

Ala-2 is subject to N-acetylalanine. Repeats lie at residues 27–36 (STCSQTSCCQ), 37–46 (PTSIQTSCCQ), and 47–56 (PTCLQTSGCE).

Functionally, the keratin products of mammalian epidermal derivatives such as wool and hair consist of microfibrils embedded in a rigid matrix of other proteins. The matrix proteins include the high-sulfur and high-tyrosine keratins, having molecular weights of 6-20 kDa, whereas the microfibrils contain the larger, low-sulfur keratins (40-56 kDa). The polypeptide is Keratin, high-sulfur matrix protein, B2C (Ovis aries (Sheep)).